Here is a 134-residue protein sequence, read N- to C-terminus: MPPKARTNARRTGRRVVKKNVANGNAYIKSTFNNTIVSITDTNGAVISWASSGHVGFKGSRKSTPFAAQMAAENAARKAMDHGMKKVDVFVKGPGSGRETAIRSLQAAGLEIGSISDVTPQPHNGCRPPKRRRV.

It belongs to the universal ribosomal protein uS11 family. As to quaternary structure, part of the 30S ribosomal subunit. Interacts with proteins S7 and S18. Binds to IF-3.

Functionally, located on the platform of the 30S subunit, it bridges several disparate RNA helices of the 16S rRNA. Forms part of the Shine-Dalgarno cleft in the 70S ribosome. The chain is Small ribosomal subunit protein uS11 from Corynebacterium glutamicum (strain R).